Here is a 511-residue protein sequence, read N- to C-terminus: 2-isopropylmalate synthase (511 aa).

Residues 5-267 form the Pyruvate carboxyltransferase domain; it reads LIIFDTTLRD…DTDINATHIL (263 aa). Residues Asp-14, His-202, His-204, and Asn-238 each contribute to the Mn(2+) site. Positions 392–511 are regulatory domain; the sequence is KLVSLKVCTE…ATNKAQHPQI (120 aa).

It belongs to the alpha-IPM synthase/homocitrate synthase family. LeuA type 1 subfamily. As to quaternary structure, homodimer. Mn(2+) serves as cofactor.

It localises to the cytoplasm. The catalysed reaction is 3-methyl-2-oxobutanoate + acetyl-CoA + H2O = (2S)-2-isopropylmalate + CoA + H(+). It functions in the pathway amino-acid biosynthesis; L-leucine biosynthesis; L-leucine from 3-methyl-2-oxobutanoate: step 1/4. Its function is as follows. Catalyzes the condensation of the acetyl group of acetyl-CoA with 3-methyl-2-oxobutanoate (2-ketoisovalerate) to form 3-carboxy-3-hydroxy-4-methylpentanoate (2-isopropylmalate). In Ruthia magnifica subsp. Calyptogena magnifica, this protein is 2-isopropylmalate synthase.